The sequence spans 344 residues: MTEKKELILAFESSCDETSVAVIENGQRILSNVIATQIKSHQRFGGVVPEVASRHHVEQITLCTQEALEQAGVTYDDLTAVAVTYGPGLVGALLIGVTAAKAIAYAHHLPLVPVNHMAGHIYAARFVKPLEYPLLALLVSGGHTELVYMPAAGQFEIIGDTRDDAAGEAYDKIGRVLGVPYPAGKEIDRLAHLGQDTFNFPRAMLKEDNLDFSFSGLKSAFINTVHHADQIGETLDQADLAASFQASVVEVLVTKTLRAAQSLKVKQLVVAGGVAANQGLREGLAAGIESAGLDLDLIMPPLRLCGDNGAMIGAAAHIALAQNTLADLDLNAIPSLDFPYQNEL.

His116 and His120 together coordinate Fe cation. Residues 138–142 (LVSGG), Asp171, Gly184, Asp188, and Asn277 contribute to the substrate site. Residue Asp307 coordinates Fe cation.

This sequence belongs to the KAE1 / TsaD family. Requires Fe(2+) as cofactor.

The protein localises to the cytoplasm. The enzyme catalyses L-threonylcarbamoyladenylate + adenosine(37) in tRNA = N(6)-L-threonylcarbamoyladenosine(37) in tRNA + AMP + H(+). In terms of biological role, required for the formation of a threonylcarbamoyl group on adenosine at position 37 (t(6)A37) in tRNAs that read codons beginning with adenine. Is involved in the transfer of the threonylcarbamoyl moiety of threonylcarbamoyl-AMP (TC-AMP) to the N6 group of A37, together with TsaE and TsaB. TsaD likely plays a direct catalytic role in this reaction. The sequence is that of tRNA N6-adenosine threonylcarbamoyltransferase from Latilactobacillus sakei subsp. sakei (strain 23K) (Lactobacillus sakei subsp. sakei).